The primary structure comprises 372 residues: Proline-rich P65 protein homolog (372 aa).

Low complexity predominate over residues 1 to 37 (MEKNRSAFQQNQQASNQPFNQDQNQYYQDPNQQQFNQ). The tract at residues 1-100 (MEKNRSAFQQ…GFDPNQQYYQ (100 aa)) is disordered. 13 consecutive repeat copies span residues 29–40 (DPNQQQFNQSGF), 41–52 (DPNQQQFNQPGF), 53–60 (DPNQQYYQ), 61–72 (DPNQQQFNQAGF), 73–80 (DQNQQYYQ), 81–92 (DPNQQQFNQPGF), 93–100 (DPNQQYYQ), 101–112 (DPNQQQFNQAGF), 113–119 (DQNQYYQ), 120–131 (DPNQQQFNQSGF), 132–138 (DQNQYYQ), 139–150 (DPNQQQFNQPSF), and 151–162 (DLNNQQFNQPGF). Polar residues predominate over residues 38-49 (SGFDPNQQQFNQ). Positions 53-100 (DPNQQYYQDPNQQQFNQAGFDQNQQYYQDPNQQQFNQPGFDPNQQYYQ) are enriched in low complexity. A disordered region spans residues 122–150 (NQQQFNQSGFDQNQYYQDPNQQQFNQPSF).

This is Proline-rich P65 protein homolog from Mycoplasma genitalium (strain ATCC 33530 / DSM 19775 / NCTC 10195 / G37) (Mycoplasmoides genitalium).